The following is a 1851-amino-acid chain: MGGPKKEENPPGGGPTSLFILTEDNPIRKYTRFIIEWPPFEYAVLLTIIANCVVLALEEHLPGGDKTVLAQKLEKTEAYFLCIFCVEASLKILALGLVLHKHSYLRNIWNIMDFFVVVTGFMTQYPQIGPEVDLRTLRAIRVLRPLKLVSGIPSLQVVLKSIIKAMAPLLQIGLLVLFAIVIFAIIGLEFYSGALHKTCYSLEDPNKLVKEGESETPCNTDNILEKATGSFVCNNTTSMCLEKWEGPNSGITSFDNIGFAMLTVFQCITMEGWTAILYWTNDALGSAFNWIYFVPLIVIGSFFMLNLVLGVLSGEFSNERNRVERRMEFQKCRFRAMFQTAMVSYLDWITQAEEVILAEERTTEEEKMHIMEARRRNAAKRKKLKSLGKSKSTDTEEEEAEEDYGDDGYLKTRSKPQGSCTGFWRAEKRFRFWIRHTVKTQWFYWFVIVLVFLNTVCVAVEHYGQPSFLTEFLYYAEFIFLGLFMSEMFIKMYALGPRIYFESSFNRFDCVVISGSIFEVIWSEVKGGSFGLSVLRALRLLRIFKVTKYWSSLRNLVISLLNSMRSIISLLFLLFLFILIFALLGMQLFGGQFNLPGGTPETNFNTFPIALLTVFQILTGEDWNEVMYQGIISQGGAQKGMIYSIYFIVLVLFGNYTLLNVFLAIAVDNLANAQELTAAEEEQVEEDKEKQLQELEKEMEALQADGVHVENGDGAVAPSKSKGKKKEEEKKEEEEVTEGPKPMLPYSSMFILSPTNPIRRGAHWVVNLPYFDFFIMVVISMSSIALAAEDPVRENSRRNKILNYFDYAFTGVFTIEMLLKIVDLGVILHPGSYLREFWNIMDAVVVICAAVSFGFDMSGSSAGQNLSTIKSLRVLRVLRPLKTIKRVPKLKAVFDCVVNSLKNVVNILIVYILFQFIFSVIGVQLFNGKFFYCTDESKHTSAECQGSYFKYEEDELLPKQELRVWKPRAFHYDNVAAAMLTLFAVQTGEGWPQVLQHSMAATYEDRGPIQNFRIEMSIFYIVYFIVFPFFFVNIFVALIIITFQEQGEAELQDGEIDKNQKSCIDFTIGARPLERYMPKNRNTFKYKVWRIVVSTPFEYFIMMLIVFNTLLLMMKYHNQGDMYEKSLKYINMGFTGMFSVETVLKIIGFGVKNFFKDPWNIFDLITVLGSIVDALWMEFGHDDSNSINVGFLRLFRAARLIKLLRQGYTIRILLWTFVQSFKALPYVCLLIAMLFFIYAIIGMQVFGNIKLGTVENSITRHNNFQSFIQGVMLLFRCATGEAWPNIMLACLKGKACDDDAEKAPGEYCGSTLAYAYFVSFIFFCSFLMLNLFVAVIMDNFDYLTRDSSILGAHHLDEFVRIWAEYDPNATGKIHYTEMYDMLKNMDPPLGFGNKCPNRLAYKKLIRMNMPLDDELRVQFTTTLFALIRENLSIKMRAPEEMDQADMELRETITNIWPLQAKKMLNLLVPPSDQLNKGKLSVGKIYAGFLILESWRSTRFGQLDSGMPMLELQDASRHPSQESLTGADAGHLHPGHSYMNGHRRSPSLRHNGSPLARSPSPRRRGHQYIHHDIGFSDTVSNVVEMVKETRHPRHGNSHPRYPRGSWSASTSPARSPSPSRYGGHLSRSKRTQLPYPTYGTTSLCQRSRSPSPARLQEMRERDRLGYGIDMGVTHVQHSYPTLASRRAGIGRRLPPTPSKPSTLQLKPTNINFPKLNASPTHTHHSTPHSVHSLPHHRDLLRDPRDMYYSSRERERDRERLRDRDRDRDRDRLHEYDLRYEYRDRERELYERERDREREVERERLEYIAPLSFEQALAMGRTGRVLPSPVLNGFKPKSGLNPRHSDSDEEDWC.

At 1-38 (MGGPKKEENPPGGGPTSLFILTEDNPIRKYTRFIIEWP) the chain is on the cytoplasmic side. Residues 25–316 (NPIRKYTRFI…LVLGVLSGEF (292 aa)) form an I repeat. The helical transmembrane segment at 39–57 (PFEYAVLLTIIANCVVLAL) threads the bilayer. The Extracellular segment spans residues 58-75 (EEHLPGGDKTVLAQKLEK). The helical transmembrane segment at 76 to 95 (TEAYFLCIFCVEASLKILAL) threads the bilayer. Residues 96 to 107 (GLVLHKHSYLRN) lie on the Cytoplasmic side of the membrane. The chain crosses the membrane as a helical span at residues 108-128 (IWNIMDFFVVVTGFMTQYPQI). The Extracellular segment spans residues 129–133 (GPEVD). The helical transmembrane segment at 134 to 152 (LRTLRAIRVLRPLKLVSGI) threads the bilayer. The Cytoplasmic segment spans residues 153–171 (PSLQVVLKSIIKAMAPLLQ). A helical transmembrane segment spans residues 172 to 191 (IGLLVLFAIVIFAIIGLEFY). The Extracellular segment spans residues 192 to 288 (SGALHKTCYS…WTNDALGSAF (97 aa)). Residues Asn234 and Asn235 are each glycosylated (N-linked (GlcNAc...) asparagine). A helical transmembrane segment spans residues 289 to 313 (NWIYFVPLIVIGSFFMLNLVLGVLS). Residues 314-441 (GEFSNERNRV…FWIRHTVKTQ (128 aa)) lie on the Cytoplasmic side of the membrane. The interval 381-417 (RKKLKSLGKSKSTDTEEEEAEEDYGDDGYLKTRSKPQ) is disordered. Acidic residues predominate over residues 395–406 (TEEEEAEEDYGD). An II repeat occupies 427-670 (EKRFRFWIRH…VFLAIAVDNL (244 aa)). Residues 442–460 (WFYWFVIVLVFLNTVCVAV) traverse the membrane as a helical segment. Over 461-475 (EHYGQPSFLTEFLYY) the chain is Extracellular. A helical transmembrane segment spans residues 476–495 (AEFIFLGLFMSEMFIKMYAL). Topologically, residues 496–503 (GPRIYFES) are cytoplasmic. Residues 504–522 (SFNRFDCVVISGSIFEVIW) traverse the membrane as a helical segment. Residues 523-531 (SEVKGGSFG) lie on the Extracellular side of the membrane. A helical membrane pass occupies residues 532-550 (LSVLRALRLLRIFKVTKYW). Residues 551–569 (SSLRNLVISLLNSMRSIIS) are Cytoplasmic-facing. The helical transmembrane segment at 570 to 589 (LLFLLFLFILIFALLGMQLF) threads the bilayer. Topologically, residues 590–642 (GGQFNLPGGTPETNFNTFPIALLTVFQILTGEDWNEVMYQGIISQGGAQKGMI) are extracellular. Residues 643–667 (YSIYFIVLVLFGNYTLLNVFLAIAV) traverse the membrane as a helical segment. Residues 668 to 767 (DNLANAQELT…IRRGAHWVVN (100 aa)) are Cytoplasmic-facing. A disordered region spans residues 710–741 (ENGDGAVAPSKSKGKKKEEEKKEEEEVTEGPK). The III repeat unit spans residues 762–1049 (AHWVVNLPYF…IITFQEQGEA (288 aa)). Residues 768–786 (LPYFDFFIMVVISMSSIAL) form a helical membrane-spanning segment. Topologically, residues 787–802 (AAEDPVRENSRRNKIL) are extracellular. The chain crosses the membrane as a helical span at residues 803-822 (NYFDYAFTGVFTIEMLLKIV). Topologically, residues 823-834 (DLGVILHPGSYL) are cytoplasmic. The helical transmembrane segment at 835–853 (REFWNIMDAVVVICAAVSF) threads the bilayer. Topologically, residues 854-866 (GFDMSGSSAGQNL) are extracellular. Asn865 carries an N-linked (GlcNAc...) asparagine glycan. The helical transmembrane segment at 867–885 (STIKSLRVLRVLRPLKTIK) threads the bilayer. Topologically, residues 886–904 (RVPKLKAVFDCVVNSLKNV) are cytoplasmic. Residues 905-924 (VNILIVYILFQFIFSVIGVQ) traverse the membrane as a helical segment. Over 925–1013 (LFNGKFFYCT…EDRGPIQNFR (89 aa)) the chain is Extracellular. A helical membrane pass occupies residues 1014-1038 (IEMSIFYIVYFIVFPFFFVNIFVAL). The Cytoplasmic segment spans residues 1039–1093 (IIITFQEQGEAELQDGEIDKNQKSCIDFTIGARPLERYMPKNRNTFKYKVWRIVV). An IV repeat occupies 1086–1347 (YKVWRIVVST…DNFDYLTRDS (262 aa)). Residues 1094-1122 (STPFEYFIMMLIVFNTLLLMMKYHNQGDM) form a helical membrane-spanning segment. The Extracellular segment spans residues 1123-1127 (YEKSL). Residues 1128-1147 (KYINMGFTGMFSVETVLKII) traverse the membrane as a helical segment. Topologically, residues 1148-1155 (GFGVKNFF) are cytoplasmic. The helical transmembrane segment at 1156 to 1174 (KDPWNIFDLITVLGSIVDA) threads the bilayer. The Extracellular portion of the chain corresponds to 1175 to 1184 (LWMEFGHDDS). Residues 1185 to 1203 (NSINVGFLRLFRAARLIKL) traverse the membrane as a helical segment. Over 1204-1222 (LRQGYTIRILLWTFVQSFK) the chain is Cytoplasmic. A helical membrane pass occupies residues 1223-1242 (ALPYVCLLIAMLFFIYAIIG). Residues 1243 to 1308 (MQVFGNIKLG…DAEKAPGEYC (66 aa)) are Extracellular-facing. Residues 1306-1348 (EYCGSTLAYAYFVSFIFFCSFLMLNLFVAVIMDNFDYLTRDSS) are phenylalkylamine binding. Residues 1309–1333 (GSTLAYAYFVSFIFFCSFLMLNLFV) form a helical membrane-spanning segment. The Cytoplasmic segment spans residues 1334 to 1851 (AVIMDNFDYL…HSDSDEEDWC (518 aa)). The EF-hand domain maps to 1353 to 1388 (HHLDEFVRIWAEYDPNATGKIHYTEMYDMLKNMDPP). The Ca(2+) site is built by Asp1366, Asn1368, Thr1370, Lys1372, and Glu1377. Disordered regions lie at residues 1513–1572 (DASR…HHDI), 1588–1653 (TRHP…SPAR), 1685–1764 (RAGI…DRDR), and 1823–1851 (VLPS…EDWC). A compositionally biased stretch (basic residues) spans 1589 to 1600 (RHPRHGNSHPRY). The span at 1604–1619 (SWSASTSPARSPSPSR) shows a compositional bias: low complexity. 2 stretches are compositionally biased toward polar residues: residues 1637–1649 (YGTT…SRSP) and 1698–1710 (KPST…TNIN). Basic and acidic residues predominate over residues 1734 to 1764 (HHRDLLRDPRDMYYSSRERERDRERLRDRDR).

This sequence belongs to the calcium channel alpha-1 subunit (TC 1.A.1.11) family. In terms of tissue distribution, expressed widely in the embryonic nervous system.

Its subcellular location is the membrane. Its function is as follows. Voltage-sensitive calcium channels (VSCC) mediate the entry of calcium ions into excitable cells and are also involved in a variety of calcium-dependent processes, including muscle contraction, neurotransmitter release, gene expression, cell motility, cell division and cell death. Probably encodes a dihydropyridine-insensitive current. Vital for survival to adulthood. This is Voltage-dependent calcium channel type A subunit alpha-1 (cac) from Drosophila melanogaster (Fruit fly).